The chain runs to 253 residues: Ribosomal RNA small subunit methyltransferase G (253 aa).

Residues Gly84, Leu89, Ile136–Glu137, and Arg155 contribute to the S-adenosyl-L-methionine site.

It belongs to the methyltransferase superfamily. RNA methyltransferase RsmG family.

The protein resides in the cytoplasm. Its function is as follows. Specifically methylates the N7 position of a guanine in 16S rRNA. This Prochlorococcus marinus (strain SARG / CCMP1375 / SS120) protein is Ribosomal RNA small subunit methyltransferase G.